A 239-amino-acid polypeptide reads, in one-letter code: Probable 2-phosphosulfolactate phosphatase (239 aa).

It belongs to the ComB family. Mg(2+) is required as a cofactor.

It carries out the reaction (2R)-O-phospho-3-sulfolactate + H2O = (2R)-3-sulfolactate + phosphate. The polypeptide is Probable 2-phosphosulfolactate phosphatase (Clostridium botulinum (strain Langeland / NCTC 10281 / Type F)).